Reading from the N-terminus, the 47-residue chain is Large ribosomal subunit protein bL34 (47 aa).

This sequence belongs to the bacterial ribosomal protein bL34 family.

The chain is Large ribosomal subunit protein bL34 from Corynebacterium glutamicum (strain R).